The following is a 952-amino-acid chain: uncharacterized protein (952 aa).

The region spanning 1–141 (MASLLARHTK…PWIADYLIRR (141 aa)) is the CheB-type methylesterase domain. Residues 168–440 (VGQFDGLEPA…SARHRIWQAL (273 aa)) form the CheR-type methyltransferase domain. A compositionally biased stretch (polar residues) spans 923-935 (HNQTEASPETSSG). A disordered region spans residues 923–952 (HNQTEASPETSSGGLPGSDGTGADGGAPRA). Residues 936-952 (GLPGSDGTGADGGAPRA) show a composition bias toward gly residues.

This is an uncharacterized protein from Rhodobacter capsulatus (Rhodopseudomonas capsulata).